The chain runs to 129 residues: Protein NrdI (129 aa).

The protein belongs to the NrdI family.

Functionally, probably involved in ribonucleotide reductase function. This Macrococcus caseolyticus (strain JCSC5402) (Macrococcoides caseolyticum) protein is Protein NrdI.